A 145-amino-acid chain; its full sequence is NADH dehydrogenase [ubiquinone] 1 alpha subcomplex subunit 12 (145 aa).

M1 is subject to N-acetylmethionine.

This sequence belongs to the complex I NDUFA12 subunit family. In terms of assembly, complex I is composed of 45 different subunits.

It is found in the mitochondrion inner membrane. In terms of biological role, accessory subunit of the mitochondrial membrane respiratory chain NADH dehydrogenase (Complex I), that is believed not to be involved in catalysis. Complex I functions in the transfer of electrons from NADH to the respiratory chain. The immediate electron acceptor for the enzyme is believed to be ubiquinone. The protein is NADH dehydrogenase [ubiquinone] 1 alpha subcomplex subunit 12 (NDUFA12) of Bos taurus (Bovine).